We begin with the raw amino-acid sequence, 288 residues long: 4-diphosphocytidyl-2-C-methyl-D-erythritol kinase (288 aa).

Lys-8 is a catalytic residue. 90–100 (PFGAGLGGGSS) contributes to the ATP binding site. Asp-132 is an active-site residue.

It belongs to the GHMP kinase family. IspE subfamily.

It catalyses the reaction 4-CDP-2-C-methyl-D-erythritol + ATP = 4-CDP-2-C-methyl-D-erythritol 2-phosphate + ADP + H(+). The protein operates within isoprenoid biosynthesis; isopentenyl diphosphate biosynthesis via DXP pathway; isopentenyl diphosphate from 1-deoxy-D-xylulose 5-phosphate: step 3/6. Functionally, catalyzes the phosphorylation of the position 2 hydroxy group of 4-diphosphocytidyl-2C-methyl-D-erythritol. The polypeptide is 4-diphosphocytidyl-2-C-methyl-D-erythritol kinase (Chlorobium chlorochromatii (strain CaD3)).